We begin with the raw amino-acid sequence, 157 residues long: Nascent polypeptide-associated complex subunit beta-1 (157 aa).

Disordered stretches follow at residues 19–42 (KVGG…KDDT) and 126–157 (EKHE…ADVE). An NAC-A/B domain is found at 38 to 103 (NKDDTKLQSQ…PQEKNLQDLF (66 aa)). Positions 126 to 142 (EKHEAKAPADAEKKDEA) are enriched in basic and acidic residues. At Thr151 the chain carries Phosphothreonine.

The protein belongs to the NAC-beta family. Part of the nascent polypeptide-associated complex (NAC), consisting of EGD2 and either EGD1 or BTT1. NAC associates with ribosomes via EGD1 or BTT1, and with the CCR4-NOT complex.

Its subcellular location is the cytoplasm. The protein resides in the nucleus. Its function is as follows. Component of the nascent polypeptide-associated complex (NAC), a dynamic component of the ribosomal exit tunnel, protecting the emerging polypeptides from interaction with other cytoplasmic proteins to ensure appropriate nascent protein targeting. The NAC complex also promotes mitochondrial protein import by enhancing productive ribosome interactions with the outer mitochondrial membrane and blocks the inappropriate interaction of ribosomes translating non-secretory nascent polypeptides with translocation sites in the membrane of the endoplasmic reticulum. EGD1 may act as a transcription factor that exert a negative effect on the expression of several genes that are transcribed by RNA polymerase II. In Saccharomyces cerevisiae (strain YJM789) (Baker's yeast), this protein is Nascent polypeptide-associated complex subunit beta-1 (EGD1).